The following is a 391-amino-acid chain: Aspartate carbamoyltransferase 3, chloroplastic (391 aa).

A chloroplast-targeting transit peptide spans 1-69 (MTASSSLFSC…SKCDKMIKTR (69 aa)). R137 and T138 together coordinate carbamoyl phosphate. The UMP site is built by R137 and T138. Position 167 (K167) interacts with L-aspartate. 3 residues coordinate carbamoyl phosphate: R188, H216, and Q219. Positions 188 and 216 each coordinate UMP. R249 and R311 together coordinate UMP. The L-aspartate site is built by R249 and R311. L351 and P352 together coordinate carbamoyl phosphate.

This sequence belongs to the aspartate/ornithine carbamoyltransferase superfamily. ATCase family. As to quaternary structure, homotrimer.

It localises to the plastid. The protein resides in the chloroplast. The enzyme catalyses carbamoyl phosphate + L-aspartate = N-carbamoyl-L-aspartate + phosphate + H(+). It participates in pyrimidine metabolism; UMP biosynthesis via de novo pathway; (S)-dihydroorotate from bicarbonate: step 2/3. Its activity is regulated as follows. Feedback inhibited by UMP. Its function is as follows. Catalyzes the condensation of carbamoyl phosphate and aspartate to form carbamoyl aspartate and inorganic phosphate, the committed step in the de novo pyrimidine nucleotide biosynthesis pathway. This chain is Aspartate carbamoyltransferase 3, chloroplastic (PYRB3), found in Pisum sativum (Garden pea).